We begin with the raw amino-acid sequence, 562 residues long: Long-chain-fatty-acid--CoA ligase (562 aa).

The protein belongs to the ATP-dependent AMP-binding enzyme family. The cofactor is Mg(2+).

The protein localises to the membrane. It carries out the reaction a long-chain fatty acid + ATP + CoA = a long-chain fatty acyl-CoA + AMP + diphosphate. It participates in lipid metabolism; fatty acid beta-oxidation. Functionally, catalyzes the esterification, concomitant with transport, of exogenous long-chain fatty acids into metabolically active CoA thioesters for subsequent degradation or incorporation into phospholipids. This Haemophilus influenzae (strain ATCC 51907 / DSM 11121 / KW20 / Rd) protein is Long-chain-fatty-acid--CoA ligase (fadD).